We begin with the raw amino-acid sequence, 323 residues long: Ankyrin repeat and SOCS box protein 11 (323 aa).

ANK repeat units follow at residues Ala-64–Leu-93, Asn-97–Gly-126, His-130–Leu-159, His-162–His-191, Gln-195–His-224, and Trp-227–Arg-256. An SOCS box domain is found at Ser-273 to Gln-323.

Belongs to the ankyrin SOCS box (ASB) family. As to quaternary structure, substrate-recognition component of the ECS(ASB11) complex, composed of ASB11, CUL5, ELOB, ELOC and RNF7/RBX2.

It localises to the endoplasmic reticulum. The protein operates within protein modification; protein ubiquitination. Functionally, substrate-recognition component of a cullin-5-RING E3 ubiquitin-protein ligase complex (ECS complex, also named CRL5 complex), which mediates the ubiquitination and subsequent proteasomal degradation of target proteins, such as BIK, DIRAS2 and RPN1. The ECS(ASB11) complex acts as a regulator of the endoplasmic reticulum unfolded protein response by mediating ubiquitination and degradation of BIK. This chain is Ankyrin repeat and SOCS box protein 11, found in Homo sapiens (Human).